We begin with the raw amino-acid sequence, 820 residues long: Trimethylamine-N-oxide reductase (820 aa).

The segment at residues Met1–Ala33 is a signal peptide (tat-type signal). Ser179 is a binding site for Mo-bis(molybdopterin guanine dinucleotide).

The protein belongs to the prokaryotic molybdopterin-containing oxidoreductase family. The cofactor is Mo-bis(molybdopterin guanine dinucleotide). Predicted to be exported by the Tat system. The position of the signal peptide cleavage has not been experimentally proven.

It localises to the periplasm. It carries out the reaction trimethylamine + 2 Fe(III)-[cytochrome c] + H2O = trimethylamine N-oxide + 2 Fe(II)-[cytochrome c] + 3 H(+). In terms of biological role, reduces trimethylamine-N-oxide (TMAO) into trimethylamine; an anaerobic reaction coupled to energy-yielding reactions. The protein is Trimethylamine-N-oxide reductase (torA) of Vibrio vulnificus (strain CMCP6).